A 497-amino-acid polypeptide reads, in one-letter code: Nuclear pore complex protein npp-16 (497 aa).

3 disordered regions span residues 76–95 (VPRRTENSSESSGETVAPRK), 210–308 (TKKS…SAPK), and 359–379 (MENQNQAKPEGSGEDDEGEYV). Basic and acidic residues-rich tracts occupy residues 231–240 (KDGDKPKETP) and 250–260 (KPAEPSEEPKA). The segment at 390-497 (EPDAVLSSKV…FTDKILEVAV (108 aa)) is ranBD1.

In terms of assembly, interacts with importin beta imb-1. Interacts with DNA-directed RNA polymerase III subunit rpc-1. Interacts with TATA-box-binding protein tbp-1. Interacts with GTF3C5 homolog tftc-5. Interacts with GTF3C3 homolog tftc-3.

The protein resides in the nucleus. The protein localises to the nuclear pore complex. Its subcellular location is the nucleus membrane. Its function is as follows. Component of the nuclear pore complex. Plays a direct role in nuclear protein import. Required for anoxia-induced prophase arrest; may function in concert with cdk-1 to arrest prophase blastomeres in response to anoxia. This is Nuclear pore complex protein npp-16 from Caenorhabditis elegans.